A 114-amino-acid chain; its full sequence is UPF0102 protein HP_0823 (114 aa).

Belongs to the UPF0102 family.

The polypeptide is UPF0102 protein HP_0823 (Helicobacter pylori (strain ATCC 700392 / 26695) (Campylobacter pylori)).